A 598-amino-acid chain; its full sequence is Elongation factor 4 (598 aa).

Residues 4-181 (KKIRNFAIIA…AIVNLIPPPQ (178 aa)) enclose the tr-type G domain. GTP contacts are provided by residues 16-21 (DHGKST) and 128-131 (NKID).

The protein belongs to the TRAFAC class translation factor GTPase superfamily. Classic translation factor GTPase family. LepA subfamily.

The protein localises to the cell membrane. It carries out the reaction GTP + H2O = GDP + phosphate + H(+). In terms of biological role, required for accurate and efficient protein synthesis under certain stress conditions. May act as a fidelity factor of the translation reaction, by catalyzing a one-codon backward translocation of tRNAs on improperly translocated ribosomes. Back-translocation proceeds from a post-translocation (POST) complex to a pre-translocation (PRE) complex, thus giving elongation factor G a second chance to translocate the tRNAs correctly. Binds to ribosomes in a GTP-dependent manner. The polypeptide is Elongation factor 4 (Mesomycoplasma hyopneumoniae (strain 7448) (Mycoplasma hyopneumoniae)).